The chain runs to 273 residues: Putative phosphoenolpyruvate synthase regulatory protein (273 aa).

Residue 154–161 (GVSRSGKT) participates in ADP binding.

This sequence belongs to the pyruvate, phosphate/water dikinase regulatory protein family. PSRP subfamily.

The enzyme catalyses [pyruvate, water dikinase] + ADP = [pyruvate, water dikinase]-phosphate + AMP + H(+). The catalysed reaction is [pyruvate, water dikinase]-phosphate + phosphate + H(+) = [pyruvate, water dikinase] + diphosphate. In terms of biological role, bifunctional serine/threonine kinase and phosphorylase involved in the regulation of the phosphoenolpyruvate synthase (PEPS) by catalyzing its phosphorylation/dephosphorylation. This chain is Putative phosphoenolpyruvate synthase regulatory protein, found in Halorhodospira halophila (strain DSM 244 / SL1) (Ectothiorhodospira halophila (strain DSM 244 / SL1)).